The chain runs to 142 residues: Hemoglobin cathodic subunit alpha (142 aa).

Ser-1 is modified (N-acetylserine). The Globin domain occupies 1–142 (SLTAKDKALV…LSSTAADKYR (142 aa)). His-59 contacts O2. His-88 lines the heme b pocket.

It belongs to the globin family. Heterotetramer of two alpha chains and two beta chains.

Involved in oxygen transport from gills to the various peripheral tissues. The polypeptide is Hemoglobin cathodic subunit alpha (Hoplosternum littorale (Hassar)).